Here is a 261-residue protein sequence, read N- to C-terminus: MTHQTHAYHMVNPSPWPLTGALSALLMTSGLTMWFHFNSMTLLTLGLTTNMLTMYQWWRDIIRESTFQGHHTPNVQKGLRYGMILFIISEVLFFTGFFWAFYHSSLAPTPELGGCWPPTGIHPLNPLEVPLLNTSVLLASGVSITWAHHSLMEGNRNHMLQALFITISLGVYFTLLQASEYYEAPFTISDGVYGSTFFVATGFHGLHVIIGSTFLIVCFFRQLKFHFTSNHHFGFEAAAWYWHFVDVVWLFLYVSIYWWGS.

Residues 1-15 (MTHQTHAYHMVNPSP) are Mitochondrial matrix-facing. A helical membrane pass occupies residues 16–34 (WPLTGALSALLMTSGLTMW). Topologically, residues 35–40 (FHFNSM) are mitochondrial intermembrane. The helical transmembrane segment at 41 to 66 (TLLTLGLTTNMLTMYQWWRDIIREST) threads the bilayer. Residues 67 to 72 (FQGHHT) lie on the Mitochondrial matrix side of the membrane. Residues 73–105 (PNVQKGLRYGMILFIISEVLFFTGFFWAFYHSS) traverse the membrane as a helical segment. Over 106-128 (LAPTPELGGCWPPTGIHPLNPLE) the chain is Mitochondrial intermembrane. The chain crosses the membrane as a helical span at residues 129–152 (VPLLNTSVLLASGVSITWAHHSLM). Topologically, residues 153-155 (EGN) are mitochondrial matrix. Residues 156–183 (RNHMLQALFITISLGVYFTLLQASEYYE) form a helical membrane-spanning segment. Over 184-190 (APFTISD) the chain is Mitochondrial intermembrane. A helical membrane pass occupies residues 191–223 (GVYGSTFFVATGFHGLHVIIGSTFLIVCFFRQL). At 224–232 (KFHFTSNHH) the chain is on the mitochondrial matrix side. Residues 233 to 256 (FGFEAAAWYWHFVDVVWLFLYVSI) traverse the membrane as a helical segment. Over 257–261 (YWWGS) the chain is Mitochondrial intermembrane.

This sequence belongs to the cytochrome c oxidase subunit 3 family. In terms of assembly, component of the cytochrome c oxidase (complex IV, CIV), a multisubunit enzyme composed of 14 subunits. The complex is composed of a catalytic core of 3 subunits MT-CO1, MT-CO2 and MT-CO3, encoded in the mitochondrial DNA, and 11 supernumerary subunits COX4I, COX5A, COX5B, COX6A, COX6B, COX6C, COX7A, COX7B, COX7C, COX8 and NDUFA4, which are encoded in the nuclear genome. The complex exists as a monomer or a dimer and forms supercomplexes (SCs) in the inner mitochondrial membrane with NADH-ubiquinone oxidoreductase (complex I, CI) and ubiquinol-cytochrome c oxidoreductase (cytochrome b-c1 complex, complex III, CIII), resulting in different assemblies (supercomplex SCI(1)III(2)IV(1) and megacomplex MCI(2)III(2)IV(2)).

The protein localises to the mitochondrion inner membrane. The catalysed reaction is 4 Fe(II)-[cytochrome c] + O2 + 8 H(+)(in) = 4 Fe(III)-[cytochrome c] + 2 H2O + 4 H(+)(out). Functionally, component of the cytochrome c oxidase, the last enzyme in the mitochondrial electron transport chain which drives oxidative phosphorylation. The respiratory chain contains 3 multisubunit complexes succinate dehydrogenase (complex II, CII), ubiquinol-cytochrome c oxidoreductase (cytochrome b-c1 complex, complex III, CIII) and cytochrome c oxidase (complex IV, CIV), that cooperate to transfer electrons derived from NADH and succinate to molecular oxygen, creating an electrochemical gradient over the inner membrane that drives transmembrane transport and the ATP synthase. Cytochrome c oxidase is the component of the respiratory chain that catalyzes the reduction of oxygen to water. Electrons originating from reduced cytochrome c in the intermembrane space (IMS) are transferred via the dinuclear copper A center (CU(A)) of subunit 2 and heme A of subunit 1 to the active site in subunit 1, a binuclear center (BNC) formed by heme A3 and copper B (CU(B)). The BNC reduces molecular oxygen to 2 water molecules using 4 electrons from cytochrome c in the IMS and 4 protons from the mitochondrial matrix. This chain is Cytochrome c oxidase subunit 3 (MT-CO3), found in Antidorcas marsupialis (Springbok).